Reading from the N-terminus, the 404-residue chain is Probable tRNA sulfurtransferase (404 aa).

Residues 60 to 165 (QPVVEALKLV…DEAAYISYEE (106 aa)) form the THUMP domain. Residues 183 to 184 (ML), 208 to 209 (HF), R265, G287, and Q296 contribute to the ATP site.

It belongs to the ThiI family.

Its subcellular location is the cytoplasm. It catalyses the reaction [ThiI sulfur-carrier protein]-S-sulfanyl-L-cysteine + a uridine in tRNA + 2 reduced [2Fe-2S]-[ferredoxin] + ATP + H(+) = [ThiI sulfur-carrier protein]-L-cysteine + a 4-thiouridine in tRNA + 2 oxidized [2Fe-2S]-[ferredoxin] + AMP + diphosphate. It carries out the reaction [ThiS sulfur-carrier protein]-C-terminal Gly-Gly-AMP + S-sulfanyl-L-cysteinyl-[cysteine desulfurase] + AH2 = [ThiS sulfur-carrier protein]-C-terminal-Gly-aminoethanethioate + L-cysteinyl-[cysteine desulfurase] + A + AMP + 2 H(+). It participates in cofactor biosynthesis; thiamine diphosphate biosynthesis. Catalyzes the ATP-dependent transfer of a sulfur to tRNA to produce 4-thiouridine in position 8 of tRNAs, which functions as a near-UV photosensor. Also catalyzes the transfer of sulfur to the sulfur carrier protein ThiS, forming ThiS-thiocarboxylate. This is a step in the synthesis of thiazole, in the thiamine biosynthesis pathway. The sulfur is donated as persulfide by IscS. This chain is Probable tRNA sulfurtransferase, found in Streptococcus pyogenes serotype M6 (strain ATCC BAA-946 / MGAS10394).